The sequence spans 1068 residues: Tricorn protease homolog (1068 aa).

A six-bladed beta propeller region spans residues 61 to 326; that stretch reads MKAYYMYPDI…DSLTKLDINL (266 aa). Residues 338–686 are seven-bladed beta propeller; the sequence is VNVMEYMNEA…RKGGVIDLSR (349 aa). The segment at 692–762 is C-1; that stretch reads EPEKEWRQML…RTSHSYETAY (71 aa). The active-site Charge relay system is H756. Positions 771 to 864 are PDZ-like; that stretch reads SVGGLGAEFE…RVTVKVLKDE (94 aa). The segment at 865–1068 is C-2; sequence RFLIYRYWVE…TAIELALKQL (204 aa). G927 is a binding site for substrate. The Nucleophile role is filled by S974. Catalysis depends on E1032, which acts as the Charge relay system.

Belongs to the peptidase S41B family.

The protein localises to the cytoplasm. Functionally, degrades oligopeptides in a sequential manner. The protein is Tricorn protease homolog (tri) of Saccharolobus solfataricus (strain ATCC 35092 / DSM 1617 / JCM 11322 / P2) (Sulfolobus solfataricus).